Consider the following 369-residue polypeptide: Tetraacyldisaccharide 4'-kinase (369 aa).

Position 52-59 (52-59 (TVGGTGKT)) interacts with ATP.

The protein belongs to the LpxK family.

It catalyses the reaction a lipid A disaccharide + ATP = a lipid IVA + ADP + H(+). The protein operates within glycolipid biosynthesis; lipid IV(A) biosynthesis; lipid IV(A) from (3R)-3-hydroxytetradecanoyl-[acyl-carrier-protein] and UDP-N-acetyl-alpha-D-glucosamine: step 6/6. Transfers the gamma-phosphate of ATP to the 4'-position of a tetraacyldisaccharide 1-phosphate intermediate (termed DS-1-P) to form tetraacyldisaccharide 1,4'-bis-phosphate (lipid IVA). In Parabacteroides distasonis (strain ATCC 8503 / DSM 20701 / CIP 104284 / JCM 5825 / NCTC 11152), this protein is Tetraacyldisaccharide 4'-kinase.